The chain runs to 279 residues: Bifunctional protein FolD (279 aa).

NADP(+) is bound by residues 159-161 (GRS), Ser-184, and Thr-225.

The protein belongs to the tetrahydrofolate dehydrogenase/cyclohydrolase family. As to quaternary structure, homodimer.

It carries out the reaction (6R)-5,10-methylene-5,6,7,8-tetrahydrofolate + NADP(+) = (6R)-5,10-methenyltetrahydrofolate + NADPH. The catalysed reaction is (6R)-5,10-methenyltetrahydrofolate + H2O = (6R)-10-formyltetrahydrofolate + H(+). It functions in the pathway one-carbon metabolism; tetrahydrofolate interconversion. Catalyzes the oxidation of 5,10-methylenetetrahydrofolate to 5,10-methenyltetrahydrofolate and then the hydrolysis of 5,10-methenyltetrahydrofolate to 10-formyltetrahydrofolate. The protein is Bifunctional protein FolD of Methanospirillum hungatei JF-1 (strain ATCC 27890 / DSM 864 / NBRC 100397 / JF-1).